We begin with the raw amino-acid sequence, 285 residues long: MLIIRNKQALKEAILKETQVNKTIGFVPTMGFLHEGHMTLVKHARKENDVVVMSVFVNPTQFGPNEDFDAYPRDEAHDAKLAEEGGVDILFVPSVEEIYPVELATKLHVIKRVSVLDGADREGHFDGVVTVLTKLFHLVNPNNAYFGQKDAQQVAVVSGLVEDYFFPVNLRIISTVRETDGLAKSSRNVYLTDKERKEAPVIHAALQLGRQLIESGETDETKIVQMMTDKINEQTAHEKIAYLALYAYPDFTPVTDWSKGIIIAAAVKYSKARLIDNELINVKRR.

30–37 contacts ATP; sequence MGFLHEGH. His-37 acts as the Proton donor in catalysis. Position 61 (Gln-61) interacts with (R)-pantoate. Gln-61 is a beta-alanine binding site. An ATP-binding site is contributed by 147 to 150; that stretch reads GQKD. Gln-153 contributes to the (R)-pantoate binding site. ATP-binding positions include Val-176 and 184-187; that span reads KSSR.

This sequence belongs to the pantothenate synthetase family. Homodimer.

It is found in the cytoplasm. It catalyses the reaction (R)-pantoate + beta-alanine + ATP = (R)-pantothenate + AMP + diphosphate + H(+). It functions in the pathway cofactor biosynthesis; (R)-pantothenate biosynthesis; (R)-pantothenate from (R)-pantoate and beta-alanine: step 1/1. Functionally, catalyzes the condensation of pantoate with beta-alanine in an ATP-dependent reaction via a pantoyl-adenylate intermediate. This Listeria welshimeri serovar 6b (strain ATCC 35897 / DSM 20650 / CCUG 15529 / CIP 8149 / NCTC 11857 / SLCC 5334 / V8) protein is Pantothenate synthetase.